Reading from the N-terminus, the 680-residue chain is DNA-directed RNA polymerase subunit beta' (680 aa).

The Zn(2+) site is built by C69, C71, C87, and C90. Mg(2+)-binding residues include D489, D491, and D493.

The protein belongs to the RNA polymerase beta' chain family. RpoC1 subfamily. As to quaternary structure, in plastids the minimal PEP RNA polymerase catalytic core is composed of four subunits: alpha, beta, beta', and beta''. When a (nuclear-encoded) sigma factor is associated with the core the holoenzyme is formed, which can initiate transcription. Mg(2+) is required as a cofactor. The cofactor is Zn(2+).

The protein localises to the plastid. It is found in the chloroplast. It carries out the reaction RNA(n) + a ribonucleoside 5'-triphosphate = RNA(n+1) + diphosphate. Functionally, DNA-dependent RNA polymerase catalyzes the transcription of DNA into RNA using the four ribonucleoside triphosphates as substrates. The polypeptide is DNA-directed RNA polymerase subunit beta' (Manihot esculenta (Cassava)).